Here is a 901-residue protein sequence, read N- to C-terminus: Modifier of cell death (901 aa).

Disordered stretches follow at residues Ala-147–Ala-169 and Pro-218–Pro-245. The segment at Phe-259 to His-282 adopts a C2H2-type zinc-finger fold. Disordered stretches follow at residues Lys-494–Pro-528, Gln-682–Glu-717, and His-779–Asn-901. Residues Glu-817–Glu-828 are compositionally biased toward low complexity. The span at Met-829–Pro-840 shows a compositional bias: acidic residues. Positions Gln-846–Lys-866 are enriched in basic and acidic residues.

Its function is as follows. Promotes programmed cell death. Its role in programmed cell death may be in conjunction with cell cycle regulatory factor efl-1 and the synthetic multivulva class B proteins dpl-1 and lin-35, and is independent of the ced-1, ced-8 and ced-9 pathways. This is Modifier of cell death from Caenorhabditis elegans.